The chain runs to 238 residues: CD63 antigen (238 aa).

The Cytoplasmic segment spans residues 1-11 (MAVEGGMKCVK). A helical membrane pass occupies residues 12–32 (FLLYVLLLAFCACAVGLIAVG). At 33–51 (VGAQLVLSQTITHGATPGS) the chain is on the extracellular side. Residues 52 to 72 (LLPVVIIAVGAFLFLVAFVGC) form a helical membrane-spanning segment. At 73 to 81 (CGTCKENYC) the chain is on the cytoplasmic side. The helical transmembrane segment at 82–102 (LMITFAIFLSLIMLVEVAAAI) threads the bilayer. Over 103–203 (AGYVFRDKVM…KIGLWLRKNV (101 aa)) the chain is Extracellular. N-linked (GlcNAc...) asparagine glycans are attached at residues Asn125, Asn130, Asn150, and Asn172. Residues 204 to 224 (LVVAAAALGIAFVEVLGIVFA) traverse the membrane as a helical segment. Residues 225–238 (CCLVKSIRSGYEVM) lie on the Cytoplasmic side of the membrane. Residues 234 to 238 (GYEVM) carry the Lysosomal targeting motif motif.

The protein belongs to the tetraspanin (TM4SF) family. In terms of assembly, interacts with TIMP1 and ITGB1 and recruits TIMP1 to ITGB1. Interacts with CD9. Identified in a complex with CD9 and ITGB3. Interacts with PMEL. Interacts with KDR/VEGFR2; identified in a complex with ITGB1 and KDR/VEGFR2 and is required to recruit KDR to ITGB1 complexes. Interacts with SYT7. Palmitoylated at a low, basal level in unstimulated platelets. The level of palmitoylation increases when platelets are activated by thrombin (in vitro).

The protein resides in the cell membrane. It localises to the lysosome membrane. The protein localises to the late endosome membrane. Its subcellular location is the endosome. It is found in the multivesicular body. The protein resides in the melanosome. It localises to the secreted. The protein localises to the extracellular exosome. Its subcellular location is the cell surface. Its function is as follows. Functions as a cell surface receptor for TIMP1 and plays a role in the activation of cellular signaling cascades. Plays a role in the activation of ITGB1 and integrin signaling, leading to the activation of AKT, FAK/PTK2 and MAP kinases. Promotes cell survival, reorganization of the actin cytoskeleton, cell adhesion, spreading and migration, via its role in the activation of AKT and FAK/PTK2. Plays a role in VEGFA signaling via its role in regulating the internalization of KDR/VEGFR2. Plays a role in intracellular vesicular transport processes, and is required for normal trafficking of the PMEL luminal domain that is essential for the development and maturation of melanocytes. Plays a role in the adhesion of leukocytes onto endothelial cells via its role in the regulation of SELP trafficking. May play a role in mast cell degranulation in response to Ms4a2/FceRI stimulation, but not in mast cell degranulation in response to other stimuli. This is CD63 antigen (CD63) from Oryctolagus cuniculus (Rabbit).